The chain runs to 278 residues: MVRGAGPGPSLSALSHPTGASGMAAAEGPGYLVSPQAEKHRRARNWTDAEMRGLMLVWEEFFDELKQTKRNAKVYEKMASKLFEMTGERRLGEEIKIKITNMTFQYRKLKCMTDSESAPPDWPYYLAIDGILAKVPESCDGKLPDSQPPGPSTSQTEASLSPPAKSTPLYFPYNQCSYEGRFEDDRSDSSSSLLSLKFRSEERPVKKRKVQSCHLQKKQLRLLEAMVEEQRRLSRAVEETCREVRRVLDQQHILQVQSLQLQERMMSLLERIITKSSV.

The tract at residues 1–27 (MVRGAGPGPSLSALSHPTGASGMAAAE) is disordered. The Myb-like domain occupies 44–129 (RNWTDAEMRG…PDWPYYLAID (86 aa)). Residues 138–168 (SCDGKLPDSQPPGPSTSQTEASLSPPAKSTP) are disordered.

This is Myb/SANT-like DNA-binding domain-containing protein 1 (MSANTD1) from Homo sapiens (Human).